Here is a 132-residue protein sequence, read N- to C-terminus: Small ribosomal subunit protein uS8 (132 aa).

It belongs to the universal ribosomal protein uS8 family. In terms of assembly, part of the 30S ribosomal subunit. Contacts proteins S5 and S12.

In terms of biological role, one of the primary rRNA binding proteins, it binds directly to 16S rRNA central domain where it helps coordinate assembly of the platform of the 30S subunit. The chain is Small ribosomal subunit protein uS8 from Ureaplasma urealyticum serovar 10 (strain ATCC 33699 / Western).